Here is a 182-residue protein sequence, read N- to C-terminus: Functional amyloid subunit FapB (182 aa).

Positions Met-1–Ala-18 are cleaved as a signal peptide. A FapB_R1 repeat occupies Asn-22–Gly-58. A FapB_R2 repeat occupies Ser-80 to Ser-114. One copy of the FapB_R3 repeat lies at Ser-150–Thr-180.

It belongs to the FapB/FapC family. Forms fibrils in vitro; in the presence of FapA the fibrils are slightly narrower. A minor component of purified amyloid fibrils. Fibrils are resistant to boiling in 2% (weight/vol) SDS and require &gt;90% (vol/vol) formic acid to dissolve.

The protein localises to the fimbrium. Its subcellular location is the secreted. Functionally, a minor component of the functional amyloid in this bacterium. Probably nucleates fibril formation; FapB nucleates fibrillation its own, FapA inhibits FapB fibril elongation. Upon overexpression of the endogenous six-gene locus (fapA-fapF) in situ, cells form large clumps during liquid growth, make large amounts of biofilm and produce amyloid fibrils. Expression of the 6 gene operon in E.coli strain BL21(DE3) induces flocculation and biofilm formation with copious extracellular fibrils. The chain is Functional amyloid subunit FapB from Pseudomonas fluorescens.